The primary structure comprises 174 residues: NADH-quinone oxidoreductase subunit B 1 (174 aa).

Positions 38, 39, 104, and 133 each coordinate [4Fe-4S] cluster.

Belongs to the complex I 20 kDa subunit family. NDH-1 is composed of 14 different subunits. Subunits NuoB, C, D, E, F, and G constitute the peripheral sector of the complex. It depends on [4Fe-4S] cluster as a cofactor.

The protein localises to the cell membrane. The catalysed reaction is a quinone + NADH + 5 H(+)(in) = a quinol + NAD(+) + 4 H(+)(out). In terms of biological role, NDH-1 shuttles electrons from NADH, via FMN and iron-sulfur (Fe-S) centers, to quinones in the respiratory chain. The immediate electron acceptor for the enzyme in this species is believed to be ubiquinone. Couples the redox reaction to proton translocation (for every two electrons transferred, four hydrogen ions are translocated across the cytoplasmic membrane), and thus conserves the redox energy in a proton gradient. The protein is NADH-quinone oxidoreductase subunit B 1 of Chloroflexus aggregans (strain MD-66 / DSM 9485).